Reading from the N-terminus, the 106-residue chain is uncharacterized protein (106 aa).

A signal peptide spans 1–31 (MKKKTKIILSLLAALIVILIVLPVLSPVVFT).

This is an uncharacterized protein from Bacillus subtilis (strain 168).